We begin with the raw amino-acid sequence, 83 residues long: Alpha-neurotoxin NTX-4 (83 aa).

An N-terminal signal peptide occupies residues 1 to 21 (MKTLLLTLLVVTIVCLDLGYT). 4 disulfides stabilise this stretch: Cys-24–Cys-45, Cys-38–Cys-62, Cys-64–Cys-75, and Cys-76–Cys-81.

This sequence belongs to the three-finger toxin family. Short-chain subfamily. Type I alpha-neurotoxin sub-subfamily. As to expression, expressed by the venom gland.

It localises to the secreted. Its function is as follows. Binds to muscle nicotinic acetylcholine receptor (nAChR) and inhibit acetylcholine from binding to the receptor, thereby impairing neuromuscular transmission. This chain is Alpha-neurotoxin NTX-4, found in Naja sputatrix (Malayan spitting cobra).